The primary structure comprises 237 residues: Small ribosomal subunit protein eS4 (237 aa).

In terms of domain architecture, S4 RNA-binding spans 38 to 110 (LPLAVVVRDV…EAKYYDLKPI (73 aa)).

This sequence belongs to the eukaryotic ribosomal protein eS4 family.

In Pyrobaculum calidifontis (strain DSM 21063 / JCM 11548 / VA1), this protein is Small ribosomal subunit protein eS4.